Here is a 266-residue protein sequence, read N- to C-terminus: Interleukin-1 beta (266 aa).

Residues 1–114 constitute a propeptide that is removed on maturation; it reads MAAVPELSSE…DTWDEEYESD (114 aa).

This sequence belongs to the IL-1 family. As to quaternary structure, monomer. In its precursor form, weakly interacts with full-length MEFV; the mature cytokine does not interact at all. Interacts with integrins ITGAV:ITGBV and ITGA5:ITGB1; integrin-binding is required for IL1B signaling. Interacts with cargo receptor TMED10; the interaction is direct and is required for the secretion of IL1B mature form. Interacts with HSP90AB1; the interaction facilitates cargo translocation into the ERGIC. Interacts with HSP90B1; the interaction facilitates cargo translocation into the ERGIC.

Its subcellular location is the cytoplasm. It localises to the cytosol. The protein resides in the secreted. The protein localises to the lysosome. It is found in the extracellular exosome. Potent pro-inflammatory cytokine. Initially discovered as the major endogenous pyrogen, induces prostaglandin synthesis, neutrophil influx and activation, T-cell activation and cytokine production, B-cell activation and antibody production, and fibroblast proliferation and collagen production. Promotes Th17 differentiation of T-cells. Synergizes with IL12/interleukin-12 to induce IFNG synthesis from T-helper 1 (Th1) cells. Plays a role in angiogenesis by inducing VEGF production synergistically with TNF and IL6. Involved in transduction of inflammation downstream of pyroptosis: its mature form is specifically released in the extracellular milieu by passing through the gasdermin-D (GSDMD) pore. The protein is Interleukin-1 beta (IL1B) of Cavia porcellus (Guinea pig).